Here is a 161-residue protein sequence, read N- to C-terminus: Endoribonuclease YbeY (161 aa).

Zn(2+) contacts are provided by His-120, His-124, and Asp-130.

Belongs to the endoribonuclease YbeY family. Zn(2+) serves as cofactor.

Its subcellular location is the cytoplasm. Functionally, single strand-specific metallo-endoribonuclease involved in late-stage 70S ribosome quality control and in maturation of the 3' terminus of the 16S rRNA. The chain is Endoribonuclease YbeY from Chlamydia trachomatis serovar L2 (strain ATCC VR-902B / DSM 19102 / 434/Bu).